A 126-amino-acid chain; its full sequence is Protein C10 (126 aa).

The residue at position 2 (Ala2) is an N-acetylalanine.

The protein belongs to the UPF0456 family. Ubiquitously expressed, with higher expression in lung.

Its subcellular location is the cytoplasm. Its function is as follows. In brain, may be required for corpus callosum development. This is Protein C10 (Grcc10) from Mus musculus (Mouse).